The chain runs to 316 residues: Serpentine receptor class gamma-4 (316 aa).

7 helical membrane-spanning segments follow: residues 21–41, 50–70, 99–121, 140–160, 188–208, 229–249, and 258–278; these read FVYL…IWGT, SFFT…FLDV, IVYP…LSIN, MKKV…NVII, FQII…SITL, TAWI…FAFF, and IFYI…PIVM.

The protein belongs to the nematode receptor-like protein srg family.

The protein resides in the membrane. The sequence is that of Serpentine receptor class gamma-4 (srg-4) from Caenorhabditis elegans.